Here is a 130-residue protein sequence, read N- to C-terminus: Flagellar assembly factor FliW (130 aa).

It belongs to the FliW family. In terms of assembly, interacts with translational regulator CsrA and flagellin(s).

The protein localises to the cytoplasm. In terms of biological role, acts as an anti-CsrA protein, binds CsrA and prevents it from repressing translation of its target genes, one of which is flagellin. Binds to flagellin and participates in the assembly of the flagellum. This chain is Flagellar assembly factor FliW, found in Borrelia turicatae (strain 91E135).